Consider the following 504-residue polypeptide: L-carnitine/gamma-butyrobetaine antiporter (504 aa).

The next 12 membrane-spanning stretches (helical) occupy residues 8 to 28 (AGIE…LCWL), 51 to 71 (WGWA…WLVF), 92 to 112 (IFMM…SIEI), 143 to 163 (GPLP…FFFV), 195 to 215 (FYLV…TPLV), 231 to 251 (LDAI…AFGL), 263 to 283 (TYLS…SFIV), 315 to 335 (AWTV…SIFL), 347 to 367 (LCLG…TYSG), 403 to 423 (LSTA…VTLI), 446 to 466 (LLVR…LLAL), and 475 to 495 (AIIA…LSFI).

Belongs to the BCCT transporter (TC 2.A.15) family. CaiT subfamily. Homotrimer.

Its subcellular location is the cell inner membrane. It carries out the reaction 4-(trimethylamino)butanoate(in) + (R)-carnitine(out) = 4-(trimethylamino)butanoate(out) + (R)-carnitine(in). It participates in amine and polyamine metabolism; carnitine metabolism. In terms of biological role, catalyzes the exchange of L-carnitine for gamma-butyrobetaine. This is L-carnitine/gamma-butyrobetaine antiporter from Proteus sp. (strain LE138).